A 1254-amino-acid polypeptide reads, in one-letter code: Ubiquitin carboxyl-terminal hydrolase 12 (1254 aa).

S84 is modified (phosphoserine). The DUSP domain maps to 97–199; that stretch reads NVLEQQRDVV…GSYPVVTNLV (103 aa). In terms of domain architecture, USP spans 364 to 1110; the sequence is TGLVNLGNTC…SAYLLFYIRR (747 aa). C373 serves as the catalytic Nucleophile. Residues 827–893 form a disordered region; sequence DEGDTEGSEA…EPELTDKPEA (67 aa). Residues 854–864 are compositionally biased toward low complexity; sequence TVTNNENVNNT. Acidic residues predominate over residues 867–883; the sequence is RDEDMELTDDVEEDAST. The active-site Proton acceptor is the H1068. S1160 is subject to Phosphoserine. Positions 1188 to 1207 are disordered; that stretch reads QDCNDEDDNDDGERTNSGRR. The span at 1189 to 1198 shows a compositional bias: acidic residues; it reads DCNDEDDNDD.

It belongs to the peptidase C19 family. In terms of assembly, interacts with FZO1.

The enzyme catalyses Thiol-dependent hydrolysis of ester, thioester, amide, peptide and isopeptide bonds formed by the C-terminal Gly of ubiquitin (a 76-residue protein attached to proteins as an intracellular targeting signal).. In terms of biological role, ubiquitin carboxyl-terminal hydrolase that recognizes ubiquitin chains that stabilize FZO1 and promote mitochondrial fusion. UBP12 deubiquitylates FZO1 only after oligomerization. This Saccharomyces cerevisiae (strain ATCC 204508 / S288c) (Baker's yeast) protein is Ubiquitin carboxyl-terminal hydrolase 12 (UBP12).